The following is a 242-amino-acid chain: Carboxy-S-adenosyl-L-methionine synthase (242 aa).

S-adenosyl-L-methionine-binding positions include Tyr39, 64–66 (GCS), 89–90 (DN), 117–118 (DI), Asn132, and Arg199.

Belongs to the class I-like SAM-binding methyltransferase superfamily. Cx-SAM synthase family. Homodimer.

The catalysed reaction is prephenate + S-adenosyl-L-methionine = carboxy-S-adenosyl-L-methionine + 3-phenylpyruvate + H2O. Functionally, catalyzes the conversion of S-adenosyl-L-methionine (SAM) to carboxy-S-adenosyl-L-methionine (Cx-SAM). This chain is Carboxy-S-adenosyl-L-methionine synthase, found in Aliivibrio salmonicida (strain LFI1238) (Vibrio salmonicida (strain LFI1238)).